A 94-amino-acid chain; its full sequence is Co-chaperonin GroES (94 aa).

Belongs to the GroES chaperonin family. As to quaternary structure, heptamer of 7 subunits arranged in a ring. Interacts with the chaperonin GroEL.

It localises to the cytoplasm. In terms of biological role, together with the chaperonin GroEL, plays an essential role in assisting protein folding. The GroEL-GroES system forms a nano-cage that allows encapsulation of the non-native substrate proteins and provides a physical environment optimized to promote and accelerate protein folding. GroES binds to the apical surface of the GroEL ring, thereby capping the opening of the GroEL channel. This is Co-chaperonin GroES from Orientia tsutsugamushi (Rickettsia tsutsugamushi).